A 186-amino-acid chain; its full sequence is Ribosome-recycling factor (186 aa).

The protein belongs to the RRF family.

The protein localises to the cytoplasm. Responsible for the release of ribosomes from messenger RNA at the termination of protein biosynthesis. May increase the efficiency of translation by recycling ribosomes from one round of translation to another. This is Ribosome-recycling factor from Phocaeicola vulgatus (strain ATCC 8482 / DSM 1447 / JCM 5826 / CCUG 4940 / NBRC 14291 / NCTC 11154) (Bacteroides vulgatus).